The chain runs to 367 residues: Nodulation protein NolF (367 aa).

It belongs to the membrane fusion protein (MFP) (TC 8.A.1) family.

Involved in the production of Medicago-specific nodulation signal molecule. The sequence is that of Nodulation protein NolF (nolF) from Rhizobium meliloti (strain 1021) (Ensifer meliloti).